The sequence spans 317 residues: Lipoyl synthase (317 aa).

Residues Cys56, Cys61, Cys67, Cys82, Cys86, Cys89, and Ser298 each coordinate [4Fe-4S] cluster. One can recognise a Radical SAM core domain in the interval 68-287 (WEDREATFLI…KEEAEQIGFS (220 aa)).

It belongs to the radical SAM superfamily. Lipoyl synthase family. [4Fe-4S] cluster is required as a cofactor.

It localises to the cytoplasm. It carries out the reaction [[Fe-S] cluster scaffold protein carrying a second [4Fe-4S](2+) cluster] + N(6)-octanoyl-L-lysyl-[protein] + 2 oxidized [2Fe-2S]-[ferredoxin] + 2 S-adenosyl-L-methionine + 4 H(+) = [[Fe-S] cluster scaffold protein] + N(6)-[(R)-dihydrolipoyl]-L-lysyl-[protein] + 4 Fe(3+) + 2 hydrogen sulfide + 2 5'-deoxyadenosine + 2 L-methionine + 2 reduced [2Fe-2S]-[ferredoxin]. The protein operates within protein modification; protein lipoylation via endogenous pathway; protein N(6)-(lipoyl)lysine from octanoyl-[acyl-carrier-protein]: step 2/2. Functionally, catalyzes the radical-mediated insertion of two sulfur atoms into the C-6 and C-8 positions of the octanoyl moiety bound to the lipoyl domains of lipoate-dependent enzymes, thereby converting the octanoylated domains into lipoylated derivatives. This Streptomyces coelicolor (strain ATCC BAA-471 / A3(2) / M145) protein is Lipoyl synthase.